The primary structure comprises 34 residues: MEALVYTFLLVSTLGIIFFAIFFREPPKLPTKKN.

Residues 3–23 (ALVYTFLLVSTLGIIFFAIFF) traverse the membrane as a helical segment.

It belongs to the PsbT family. As to quaternary structure, PSII is composed of 1 copy each of membrane proteins PsbA, PsbB, PsbC, PsbD, PsbE, PsbF, PsbH, PsbI, PsbJ, PsbK, PsbL, PsbM, PsbT, PsbY, PsbZ, Psb30/Ycf12, at least 3 peripheral proteins of the oxygen-evolving complex and a large number of cofactors. It forms dimeric complexes.

The protein localises to the plastid. Its subcellular location is the chloroplast thylakoid membrane. Its function is as follows. Found at the monomer-monomer interface of the photosystem II (PS II) dimer, plays a role in assembly and dimerization of PSII. PSII is a light-driven water plastoquinone oxidoreductase, using light energy to abstract electrons from H(2)O, generating a proton gradient subsequently used for ATP formation. The chain is Photosystem II reaction center protein T from Atropa belladonna (Belladonna).